Reading from the N-terminus, the 249-residue chain is Cis-4-hydroxycyclohexanecarboxylate dehydrogenase (249 aa).

Aspartate 38, aspartate 63, valine 64, asparagine 90, tyrosine 156, lysine 160, alanine 189, and threonine 191 together coordinate NAD(+). Tyrosine 156 acts as the Proton acceptor in catalysis.

This sequence belongs to the short-chain dehydrogenases/reductases (SDR) family. As to quaternary structure, homotetramer.

The catalysed reaction is cis-4-hydroxycyclohexane-1-carboxylate + NAD(+) = 4-oxocyclohexane-1-carboxylate + NADH + H(+). Dehydrogenase involved in a cyclohexanecarboxylate (CHCA) degradation pathway. Catalyzes the NAD(+)-dependent dehydrogenation of cis-4-hydroxycyclohexanecarboxylate (cis-4-hydroxyCHCA) to form 4-oxocyclohexanecarboxylate (4-oxoCHCA). Is highly specific for the cis-4-hydroxy derivative and shows only weak activity with trans-4-hydroxyCHCA. Cannot use NADP(+). The protein is Cis-4-hydroxycyclohexanecarboxylate dehydrogenase of Sinomonas cyclohexanicum (Corynebacterium cyclohexanicum).